The primary structure comprises 327 residues: Leucotoxin LukD (327 aa).

A signal peptide spans 1–26 (MKIEKLGKSSVASSIALLLLSNTVDA).

It belongs to the aerolysin family. As to quaternary structure, toxicity requires sequential binding and synergistic association of a class S and a class F component which form heterooligomeric complexes. LukE (class S) associates with LukD (class F). LukD can also associate with HlgA.

It is found in the secreted. Functionally, part of a bi-component leucotoxin that acts by forming pores in the membrane of the target cells. LukE-LukD is as effective as the Panton-Valentine leucocidin (PVL) for inducing dermonecrosis when injected in the rabbit skin, but not hemolytic and poorly leucotoxic on human blood cells compared to other leucotoxins expressed by S.aureus. HlgA-LukD is a Ca(2+) channel inducer. The chain is Leucotoxin LukD (lukD) from Staphylococcus aureus.